Reading from the N-terminus, the 859-residue chain is Active breakpoint cluster region-related protein (859 aa).

The segment at 31–84 (AEGHEEQKGPPEGSETMPYIDESPTMSPQLSARSQGGGESISPTPPEGLAPGVE) is disordered. Polar residues predominate over residues 54–64 (PTMSPQLSARS). S57 is modified (phosphoserine). A DH domain is found at 91 to 284 (MRKLVLSGFL…QNFLSSINED (194 aa)). Residues 301 to 459 (QLVKDGFLVE…WREAIQKLQK (159 aa)) enclose the PH domain. Residues 484–613 (TVHNIPVTSN…ESKNWHTDVI (130 aa)) form the C2 domain. The 199-residue stretch at 647–845 (VKISVVTKRE…YYLQHPPISF (199 aa)) folds into the Rho-GAP domain.

As to quaternary structure, interacts with DLG4. As to expression, expressed in brain, including the cortex, hippocampus, cerebellum, and brainstem, as well as the spinal cord (at protein level).

The protein resides in the cell projection. Its subcellular location is the dendritic spine. It is found in the axon. It localises to the synapse. Functionally, protein with a unique structure having two opposing regulatory activities toward small GTP-binding proteins. The C-terminus is a GTPase-activating protein domain which stimulates GTP hydrolysis by RAC1, RAC2 and CDC42. Accelerates the intrinsic rate of GTP hydrolysis of RAC1 or CDC42, leading to down-regulation of the active GTP-bound form. The central Dbl homology (DH) domain functions as guanine nucleotide exchange factor (GEF) that modulates the GTPases CDC42, RHOA and RAC1. Promotes the conversion of CDC42, RHOA and RAC1 from the GDP-bound to the GTP-bound form. Functions as an important negative regulator of neuronal RAC1 activity. Regulates macrophage functions such as CSF-1 directed motility and phagocytosis through the modulation of RAC1 activity. This is Active breakpoint cluster region-related protein from Rattus norvegicus (Rat).